We begin with the raw amino-acid sequence, 732 residues long: 1,4-alpha-glucan branching enzyme GlgB 2 (732 aa).

Residue Asp-413 is the Nucleophile of the active site. Catalysis depends on Glu-466, which acts as the Proton donor.

The protein belongs to the glycosyl hydrolase 13 family. GlgB subfamily. As to quaternary structure, monomer.

The catalysed reaction is Transfers a segment of a (1-&gt;4)-alpha-D-glucan chain to a primary hydroxy group in a similar glucan chain.. Its pathway is glycan biosynthesis; glycogen biosynthesis. Functionally, catalyzes the formation of the alpha-1,6-glucosidic linkages in glycogen by scission of a 1,4-alpha-linked oligosaccharide from growing alpha-1,4-glucan chains and the subsequent attachment of the oligosaccharide to the alpha-1,6 position. In Rhizobium etli (strain ATCC 51251 / DSM 11541 / JCM 21823 / NBRC 15573 / CFN 42), this protein is 1,4-alpha-glucan branching enzyme GlgB 2.